The sequence spans 320 residues: Acetyl-coenzyme A carboxylase carboxyl transferase subunit alpha (320 aa).

A CoA carboxyltransferase C-terminal domain is found at 41–295; the sequence is SIEEKAAQAL…GDAIAGALND (255 aa).

The protein belongs to the AccA family. Acetyl-CoA carboxylase is a heterohexamer composed of biotin carboxyl carrier protein (AccB), biotin carboxylase (AccC) and two subunits each of ACCase subunit alpha (AccA) and ACCase subunit beta (AccD).

It is found in the cytoplasm. It catalyses the reaction N(6)-carboxybiotinyl-L-lysyl-[protein] + acetyl-CoA = N(6)-biotinyl-L-lysyl-[protein] + malonyl-CoA. The protein operates within lipid metabolism; malonyl-CoA biosynthesis; malonyl-CoA from acetyl-CoA: step 1/1. Component of the acetyl coenzyme A carboxylase (ACC) complex. First, biotin carboxylase catalyzes the carboxylation of biotin on its carrier protein (BCCP) and then the CO(2) group is transferred by the carboxyltransferase to acetyl-CoA to form malonyl-CoA. The polypeptide is Acetyl-coenzyme A carboxylase carboxyl transferase subunit alpha (Nitrobacter winogradskyi (strain ATCC 25391 / DSM 10237 / CIP 104748 / NCIMB 11846 / Nb-255)).